A 389-amino-acid chain; its full sequence is 11-beta-hydroxysteroid dehydrogenase-like 5 (389 aa).

Residues 11–31 traverse the membrane as a helical; Signal-anchor for type II membrane protein segment; that stretch reads LVAPPATMVVMAFAWPLLSFI. Residues 56–82 and Asp107 contribute to the NADP(+) site; that span reads GASS…VARR. Position 186 (Ser186) interacts with substrate. Tyr199 functions as the Proton acceptor in the catalytic mechanism. Residues 199–203 and Lys203 each bind NADP(+); that span reads YSAAK. The interval 337 to 381 is disordered; sequence LMLEGGPPRVPASPPRYTASPPHYTASPPRYPASPPRYPASPPRF. Pro residues predominate over residues 365–378; the sequence is PRYPASPPRYPASP.

The protein belongs to the short-chain dehydrogenases/reductases (SDR) family.

It is found in the membrane. The polypeptide is 11-beta-hydroxysteroid dehydrogenase-like 5 (HSD5) (Arabidopsis thaliana (Mouse-ear cress)).